The primary structure comprises 179 residues: Large ribosomal subunit protein uL6 (179 aa).

It belongs to the universal ribosomal protein uL6 family. Part of the 50S ribosomal subunit.

In terms of biological role, this protein binds to the 23S rRNA, and is important in its secondary structure. It is located near the subunit interface in the base of the L7/L12 stalk, and near the tRNA binding site of the peptidyltransferase center. The sequence is that of Large ribosomal subunit protein uL6 from Prochlorococcus marinus (strain SARG / CCMP1375 / SS120).